The sequence spans 333 residues: Protein SEEDLING LETHAL 1, chloroplastic (333 aa).

A chloroplast-targeting transit peptide spans 1 to 55 (MQQEALSFLSSSLPSLHHNFPSLSRLRFNNFPALSFKPNTSSSSSSFFKSPDIPS). Positions 38–67 (PNTSSSSSSFFKSPDIPSLSSTTTTTTTTE) are disordered.

It belongs to the mTERF family. Self-interacts. Associates with the plastid-encoded RNA polymerase (PEP) complex. Interacts directly with PTAC7/PAP12, PTAC12/HMR/PAP5 and PTAC14/PAP7. As to expression, expressed in green aerial tissues such as cotyledons, leaves, flowers and siliques, but not in roots.

The protein localises to the plastid. It is found in the chloroplast stroma. It localises to the chloroplast nucleoid. Its function is as follows. Transcription termination factor required for chloroplast gene expression and protein synthesis in chloroplasts. Necessary for chloroplast photosynthetic complexes assembly by modulating the accumulation of photosynthetic proteins. Essential for embryogenesis. The sequence is that of Protein SEEDLING LETHAL 1, chloroplastic from Arabidopsis thaliana (Mouse-ear cress).